Here is a 289-residue protein sequence, read N- to C-terminus: UPF0173 metal-dependent hydrolase H16_A2129 (289 aa).

Belongs to the UPF0173 family.

This is UPF0173 metal-dependent hydrolase H16_A2129 from Cupriavidus necator (strain ATCC 17699 / DSM 428 / KCTC 22496 / NCIMB 10442 / H16 / Stanier 337) (Ralstonia eutropha).